A 932-amino-acid polypeptide reads, in one-letter code: von Willebrand factor A domain-containing protein DDB_G0292028 (932 aa).

The disordered stretch occupies residues 1 to 49 (MNFIKKVIGGGSSKSKTDIKIEDEQHEQQHEQQHEKQQIPDKISTSKVN). A compositionally biased stretch (basic and acidic residues) spans 15-39 (SKTDIKIEDEQHEQQHEQQHEKQQI). Residues 95–222 (LTSPGLNTKV…DVTVNITITS (128 aa)) enclose the VIT domain. The region spanning 342-521 (EFIFVLDCSG…IAMQPTLSNI (180 aa)) is the VWFA domain. Disordered regions lie at residues 661–752 (QQIN…SQAQ) and 800–834 (TSQI…STSS). Positions 677 to 686 (TRVQGSSSVF) are enriched in polar residues. The segment covering 815-834 (SSSPTIQKSSSLPSRPSTSS) has biased composition (low complexity).

The protein is von Willebrand factor A domain-containing protein DDB_G0292028 of Dictyostelium discoideum (Social amoeba).